A 955-amino-acid polypeptide reads, in one-letter code: Auxin response factor 11 (955 aa).

The segment at residues 143–245 (FCKNLTASDT…QLLLGVRRAT (103 aa)) is a DNA-binding region (TF-B3). A compositionally biased stretch (polar residues) spans 518-543 (ESKLNATSRDPRNTDSYTSRSTSEQN). Disordered regions lie at residues 518–573 (ESKL…LSSA) and 609–646 (TQGN…KSVN). The segment covering 551–560 (KTRRSKKGLP) has biased composition (basic residues). In terms of domain architecture, PB1 spans 852 to 936 (RTYTKVQKQG…RCIRILSPSE (85 aa)).

This sequence belongs to the ARF family. Homodimers and heterodimers.

It is found in the nucleus. Functionally, auxin response factors (ARFs) are transcriptional factors that bind specifically to the DNA sequence 5'-TGTCTC-3' found in the auxin-responsive promoter elements (AuxREs). The protein is Auxin response factor 11 (ARF11) of Oryza sativa subsp. indica (Rice).